The chain runs to 366 residues: Aminomethyltransferase (366 aa).

This sequence belongs to the GcvT family. As to quaternary structure, the glycine cleavage system is composed of four proteins: P, T, L and H.

It carries out the reaction N(6)-[(R)-S(8)-aminomethyldihydrolipoyl]-L-lysyl-[protein] + (6S)-5,6,7,8-tetrahydrofolate = N(6)-[(R)-dihydrolipoyl]-L-lysyl-[protein] + (6R)-5,10-methylene-5,6,7,8-tetrahydrofolate + NH4(+). The glycine cleavage system catalyzes the degradation of glycine. This chain is Aminomethyltransferase, found in Moorella thermoacetica (strain ATCC 39073 / JCM 9320).